The sequence spans 348 residues: Neuronal growth regulator 1 (348 aa).

The N-terminal stretch at 1–31 (MVLLAQGACCSNQWLAAVLLSLCSCLPAGQS) is a signal peptide. 3 Ig-like C2-type domains span residues 32–128 (VDFP…VHLT), 133–215 (PKIY…RVIV), and 219–307 (PTIQ…LPLN). The cysteines at positions 54 and 112 are disulfide-linked. N-linked (GlcNAc...) asparagine glycans are attached at residues N67 and N149. Intrachain disulfides connect C154/C197 and C239/C291. Y181 bears the Phosphotyrosine mark. Residues N269, N280, N288, and N301 are each glycosylated (N-linked (GlcNAc...) asparagine). G318 carries the GPI-anchor amidated glycine lipid modification. A propeptide spans 319–348 (SACDLFSCWSLALTLSSVISIFYLKNAILQ) (removed in mature form).

Belongs to the immunoglobulin superfamily. IgLON family. Expressed in brain.

It is found in the cell membrane. Functionally, may be involved in cell-adhesion. May function as a trans-neural growth-promoting factor in regenerative axon sprouting in the mammalian brain. The polypeptide is Neuronal growth regulator 1 (Negr1) (Mus musculus (Mouse)).